Consider the following 152-residue polypeptide: Ribosomal RNA large subunit methyltransferase H (152 aa).

Residues leucine 70, glycine 101, and 120-125 (LSDLTF) contribute to the S-adenosyl-L-methionine site.

The protein belongs to the RNA methyltransferase RlmH family. In terms of assembly, homodimer.

It is found in the cytoplasm. The catalysed reaction is pseudouridine(1915) in 23S rRNA + S-adenosyl-L-methionine = N(3)-methylpseudouridine(1915) in 23S rRNA + S-adenosyl-L-homocysteine + H(+). Its function is as follows. Specifically methylates the pseudouridine at position 1915 (m3Psi1915) in 23S rRNA. The polypeptide is Ribosomal RNA large subunit methyltransferase H (Pseudothermotoga lettingae (strain ATCC BAA-301 / DSM 14385 / NBRC 107922 / TMO) (Thermotoga lettingae)).